A 266-amino-acid polypeptide reads, in one-letter code: MRTEMTPLVLSYQEADDILEHLVDNFFNEVPSDDDLYVPSLYELYDLDVESAGEDNNEQAVNEFFPESLILAASEGLFLPEPPVLSPVCEPIGGECMPQLHPEDMDLLCYEMGFPCSDSEDEQDENGMAHVSASAAAAAADREREEFQLDHPELPGHNCKSCEHHRNSTGNTDLMCSLCYLRAYNMFIYSPVSDNEPEPNSTLDGDERPSPPKLGSAVPEGVIKPVPQRVTGRRRCAVESILDLIQEEEREQTVPVDLSVKRPRCN.

The interaction with RB1 in competition with E2F1 stretch occupies residues 39-47 (PSLYELYDL). The segment at 75–145 (EGLFLPEPPV…AAAAADRERE (71 aa)) is interaction with UBE2I. Residues 98–102 (PQLHP) carry the PXLXP motif, interaction with host ZMYND11 motif. Residues 107 to 111 (LLCYE) carry the LXCXE motif, interaction with host RB1 and TMEM173/STING motif. A zinc finger spans residues 159 to 179 (CKSCEHHRNSTGNTDLMCSLC). The tract at residues 195-226 (NEPEPNSTLDGDERPSPPKLGSAVPEGVIKPV) is disordered. The short motif at 255-259 (PVDLS) is the PXDLS motif, CTBP-binding element. The Nuclear localization signal signature appears at 261–265 (KRPRC).

This sequence belongs to the adenoviridae E1A protein family. Interacts with host UBE2I; this interaction interferes with polySUMOylation. Interacts with host RB1; this interaction induces the aberrant dissociation of RB1-E2F1 complex thereby disrupting the activity of RB1 and activating E2F1-regulated genes. Interacts with host ATF7; the interaction enhances ATF7-mediated viral transactivation activity which requires the zinc binding domains of both proteins. Isoform early E1A 32 kDa protein and isoform early E1A 26 kDa protein interact (via N-terminus) with CUL1 and E3 ubiquitin ligase RBX1; these interactions inhibit RBX1-CUL1-dependent elongation reaction of ubiquitin chains and attenuate ubiquitination of SCF(FBXW7) target proteins. Interacts (via PXLXP motif) with host ZMYND11/BS69 (via MYND-type zinc finger); this interaction inhibits E1A mediated transactivation. Interacts with host EP300; this interaction stimulates the acetylation of RB1 by recruiting EP300 and RB1 into a multimeric-protein complex. Interacts with host CTBP1 and CTBP2; this interaction seems to potentiate viral replication. Interacts with host DCAF7. Interacts with host DYRK1A. Interacts with host KPNA4; this interaction allows E1A import into the host nucleus. Interacts with host EP400; this interaction stabilizes MYC. Interacts with host TBP protein; this interaction probably disrupts the TBP-TATA complex. Interacts (via LXCXE motif) with host TMEM173/STING; this interaction impairs the ability of TMEM173/STING to sense cytosolic DNA and promote the production of type I interferon (IFN-alpha and IFN-beta). Interacts (via C-terminus) with host ZBED1/hDREF (via C-terminus); the interaction is direct.

It localises to the host nucleus. Its function is as follows. Plays a role in viral genome replication by driving entry of quiescent cells into the cell cycle. Stimulation of progression from G1 to S phase allows the virus to efficiently use the cellular DNA replicating machinery to achieve viral genome replication. E1A protein has both transforming and trans-activating activities. Induces the disassembly of the E2F1 transcription factor from RB1 by direct competition for the same binding site on RB1, with subsequent transcriptional activation of E2F1-regulated S-phase genes and of the E2 region of the adenoviral genome. Release of E2F1 leads to the ARF-mediated inhibition of MDM2 and causes TP53/p53 to accumulate because it is not targeted for degradation by MDM2-mediated ubiquitination anymore. This increase in TP53, in turn, would arrest the cell proliferation and direct its death but this effect is counteracted by the viral protein E1B-55K. Inactivation of the ability of RB1 to arrest the cell cycle is critical for cellular transformation, uncontrolled cellular growth and proliferation induced by viral infection. Interaction with RBX1 and CUL1 inhibits ubiquitination of the proteins targeted by SCF(FBXW7) ubiquitin ligase complex, and may be linked to unregulated host cell proliferation. The tumorigenesis-restraining activity of E1A may be related to the disruption of the host CtBP-CtIP complex through the CtBP binding motif. Interaction with host TMEM173/STING impairs the ability of TMEM173/STING to sense cytosolic DNA and promote the production of type I interferon (IFN-alpha and IFN-beta). Promotes the sumoylation of host ZBED1/hDREF with SUMO1. The sequence is that of Early E1A protein from Homo sapiens (Human).